A 125-amino-acid polypeptide reads, in one-letter code: Large ribosomal subunit protein bL12 (125 aa).

The protein belongs to the bacterial ribosomal protein bL12 family. Homodimer. Part of the ribosomal stalk of the 50S ribosomal subunit. Forms a multimeric L10(L12)X complex, where L10 forms an elongated spine to which 2 to 4 L12 dimers bind in a sequential fashion. Binds GTP-bound translation factors.

In terms of biological role, forms part of the ribosomal stalk which helps the ribosome interact with GTP-bound translation factors. Is thus essential for accurate translation. This Polaromonas sp. (strain JS666 / ATCC BAA-500) protein is Large ribosomal subunit protein bL12.